A 111-amino-acid chain; its full sequence is uncharacterized protein (111 aa).

This sequence belongs to the asfivirus E111R family.

This is an uncharacterized protein from Ornithodoros (relapsing fever ticks).